We begin with the raw amino-acid sequence, 218 residues long: uncharacterized protein (218 aa).

One can recognise an ACT domain in the interval 4–83 (GISIEAENKV…IHSSLKKIYG (80 aa)).

This is an uncharacterized protein from Methanocaldococcus jannaschii (strain ATCC 43067 / DSM 2661 / JAL-1 / JCM 10045 / NBRC 100440) (Methanococcus jannaschii).